The sequence spans 468 residues: MRMLPSYIPSPPRGVWYLGPLPVRAYAVCVITGIIVALLIGDRRLTARGGERGMTYDIALWAVPFGLIGGRLYHLATDWRTYFGDGGAGLAAALRIWDGGLGIWGAVTLGVMGAWIGCRRCGIPLPVLLDAVAPGVVLAQAIGRLGNYFNQELYGRETTMPWGLEIFYRRDPSGFDVPNSLDGVSTGQVAFVVQPTFLYELIWNVLVFVALIYIDRRFIIGHGRLFGFYVAFYCAGRFCVELLRDDPATLIAGIRINSFTSTFVFIGAVVYIILAPKGREAPGALRGSEYVVDEALEREPAELAAAAVASAASAVGPVGPGEPNQPDDVAEAVKAEVAEVTDEVAAESVVQVADRDGESTPAVEETSEADIEREQPGDLAGQAPAAHQVDAEAASAAPEEPAALASEAHDETEPEVPEKAAPIPDPAKPDELAVAGPGDDPAEPDGIRRQDDFSSRRRRWWRLRRRRQ.

The next 3 helical transmembrane spans lie at 21–41 (LPVR…LLIG), 56–76 (YDIA…YHLA), and 96–116 (IWDG…GAWI). Arginine 144 contacts a 1,2-diacyl-sn-glycero-3-phospho-(1'-sn-glycerol). A run of 3 helical transmembrane segments spans residues 192–212 (VVQP…VALI), 218–238 (FIIG…AGRF), and 256–276 (INSF…ILAP). The disordered stretch occupies residues 349 to 468 (VVQVADRDGE…RWWRLRRRRQ (120 aa)). Low complexity predominate over residues 391-406 (AEAASAAPEEPAALAS). Over residues 445-455 (DGIRRQDDFSS) the composition is skewed to basic and acidic residues. Basic residues predominate over residues 456–468 (RRRRWWRLRRRRQ).

This sequence belongs to the Lgt family.

It is found in the cell membrane. The enzyme catalyses L-cysteinyl-[prolipoprotein] + a 1,2-diacyl-sn-glycero-3-phospho-(1'-sn-glycerol) = an S-1,2-diacyl-sn-glyceryl-L-cysteinyl-[prolipoprotein] + sn-glycerol 1-phosphate + H(+). It participates in protein modification; lipoprotein biosynthesis (diacylglyceryl transfer). In terms of biological role, catalyzes the transfer of the diacylglyceryl group from phosphatidylglycerol to the sulfhydryl group of the N-terminal cysteine of a prolipoprotein, the first step in the formation of mature lipoproteins. This Mycobacterium bovis (strain ATCC BAA-935 / AF2122/97) protein is Phosphatidylglycerol--prolipoprotein diacylglyceryl transferase.